Here is a 186-residue protein sequence, read N- to C-terminus: Ribosome-recycling factor (186 aa).

It belongs to the RRF family.

It is found in the cytoplasm. Functionally, responsible for the release of ribosomes from messenger RNA at the termination of protein biosynthesis. May increase the efficiency of translation by recycling ribosomes from one round of translation to another. The sequence is that of Ribosome-recycling factor from Cupriavidus taiwanensis (strain DSM 17343 / BCRC 17206 / CCUG 44338 / CIP 107171 / LMG 19424 / R1) (Ralstonia taiwanensis (strain LMG 19424)).